The primary structure comprises 379 residues: Queuine tRNA-ribosyltransferase (379 aa).

Asp95 functions as the Proton acceptor in the catalytic mechanism. Residues Asp95–Phe99, Asp149, Gln197, and Gly224 each bind substrate. The tract at residues Gly255 to Glu261 is RNA binding. The Nucleophile role is filled by Asp274. Zn(2+)-binding residues include Cys312, Cys314, Cys317, and His343.

It belongs to the queuine tRNA-ribosyltransferase family. Homodimer. Within each dimer, one monomer is responsible for RNA recognition and catalysis, while the other monomer binds to the replacement base PreQ1. Zn(2+) serves as cofactor.

The enzyme catalyses 7-aminomethyl-7-carbaguanine + guanosine(34) in tRNA = 7-aminomethyl-7-carbaguanosine(34) in tRNA + guanine. Its pathway is tRNA modification; tRNA-queuosine biosynthesis. Catalyzes the base-exchange of a guanine (G) residue with the queuine precursor 7-aminomethyl-7-deazaguanine (PreQ1) at position 34 (anticodon wobble position) in tRNAs with GU(N) anticodons (tRNA-Asp, -Asn, -His and -Tyr). Catalysis occurs through a double-displacement mechanism. The nucleophile active site attacks the C1' of nucleotide 34 to detach the guanine base from the RNA, forming a covalent enzyme-RNA intermediate. The proton acceptor active site deprotonates the incoming PreQ1, allowing a nucleophilic attack on the C1' of the ribose to form the product. After dissociation, two additional enzymatic reactions on the tRNA convert PreQ1 to queuine (Q), resulting in the hypermodified nucleoside queuosine (7-(((4,5-cis-dihydroxy-2-cyclopenten-1-yl)amino)methyl)-7-deazaguanosine). This Solibacter usitatus (strain Ellin6076) protein is Queuine tRNA-ribosyltransferase.